The following is a 319-amino-acid chain: Annexin A5 (319 aa).

N-acetylalanine is present on A2. 4 Annexin repeats span residues 13–84 (FDGR…AMMK), 85–156 (PSRL…VLLQ), 168–240 (AQVE…AVVK), and 244–315 (SIPA…LLCG). A Glycyl lysine isopeptide (Lys-Gly) (interchain with G-Cter in SUMO1); alternate cross-link involves residue K27. K27 is covalently cross-linked (Glycyl lysine isopeptide (Lys-Gly) (interchain with G-Cter in SUMO2); alternate). Phosphoserine is present on S35. Residues K68, K74, K77, K95, and K99 each carry the N6-acetyllysine modification. Position 288 is an N6-succinyllysine (K288). Positions 312 to 318 (LLCGGED) match the [IL]-x-C-x-x-[DE] motif motif.

Belongs to the annexin family. Monomer. Binds ATRX and EIF5B. Post-translationally, S-nitrosylation is induced by interferon-gamma and oxidatively-modified low-densitity lipoprotein (LDL(ox)) possibly implicating the iNOS-S100A8/9 transnitrosylase complex.

This protein is an anticoagulant protein that acts as an indirect inhibitor of the thromboplastin-specific complex, which is involved in the blood coagulation cascade. This chain is Annexin A5 (Anxa5), found in Mus musculus (Mouse).